We begin with the raw amino-acid sequence, 436 residues long: GTPase Der (436 aa).

EngA-type G domains are found at residues 4–167 (SVVA…PNES) and 176–351 (IYFS…ESHT). GTP contacts are provided by residues 10–17 (GRPNVGKS), 57–61 (DTGGI), 119–122 (NKMD), 182–189 (GRPNVGKS), 229–233 (DTAGM), and 294–297 (NKWD). Positions 352–436 (KRIPTNVLND…PIKLFARRRQ (85 aa)) constitute a KH-like domain.

It belongs to the TRAFAC class TrmE-Era-EngA-EngB-Septin-like GTPase superfamily. EngA (Der) GTPase family. Associates with the 50S ribosomal subunit.

Its function is as follows. GTPase that plays an essential role in the late steps of ribosome biogenesis. The protein is GTPase Der of Oceanobacillus iheyensis (strain DSM 14371 / CIP 107618 / JCM 11309 / KCTC 3954 / HTE831).